The following is a 406-amino-acid chain: Multifunctional CCA protein (406 aa).

The ATP site is built by glycine 8 and arginine 11. Positions 8 and 11 each coordinate CTP. Mg(2+) is bound by residues aspartate 21 and aspartate 23. 3 residues coordinate ATP: arginine 91, arginine 138, and arginine 141. Positions 91, 138, and 141 each coordinate CTP. The HD domain occupies 229–331; sequence TGIHQEMVSD…LELLGRCDAL (103 aa).

It belongs to the tRNA nucleotidyltransferase/poly(A) polymerase family. Bacterial CCA-adding enzyme type 1 subfamily. As to quaternary structure, monomer. Can also form homodimers and oligomers. It depends on Mg(2+) as a cofactor. Ni(2+) is required as a cofactor.

The enzyme catalyses a tRNA precursor + 2 CTP + ATP = a tRNA with a 3' CCA end + 3 diphosphate. It catalyses the reaction a tRNA with a 3' CCA end + 2 CTP + ATP = a tRNA with a 3' CCACCA end + 3 diphosphate. Its function is as follows. Catalyzes the addition and repair of the essential 3'-terminal CCA sequence in tRNAs without using a nucleic acid template. Adds these three nucleotides in the order of C, C, and A to the tRNA nucleotide-73, using CTP and ATP as substrates and producing inorganic pyrophosphate. tRNA 3'-terminal CCA addition is required both for tRNA processing and repair. Also involved in tRNA surveillance by mediating tandem CCA addition to generate a CCACCA at the 3' terminus of unstable tRNAs. While stable tRNAs receive only 3'-terminal CCA, unstable tRNAs are marked with CCACCA and rapidly degraded. This is Multifunctional CCA protein from Stenotrophomonas maltophilia (strain R551-3).